Reading from the N-terminus, the 226-residue chain is uncharacterized protein (226 aa).

This is an uncharacterized protein from Haemophilus influenzae (strain ATCC 51907 / DSM 11121 / KW20 / Rd).